Consider the following 501-residue polypeptide: MLO-like protein 5 (501 aa).

Residues 1 to 22 lie on the Extracellular side of the membrane; sequence MAGGGGGSTSGEGPRELDQTPT. A helical membrane pass occupies residues 23–43; that stretch reads WAVSTVCGVIILISIVLELMI. Over 44–68 the chain is Cytoplasmic; sequence HKIGEVFTERRKKALYEALQKIKNE. Residues 69-89 traverse the membrane as a helical segment; it reads LMVLGFISLLLTFGQNYIASL. Over 90–151 the chain is Extracellular; it reads CVASRYGHAM…ISLNALHQVH (62 aa). Residues 152–172 form a helical membrane-spanning segment; the sequence is IFIFFLAVFHVIYSAITMMLG. Topologically, residues 173 to 273 are cytoplasmic; the sequence is RAKIRGWKVW…IKRSLEDDFK (101 aa). Residues 274-294 form a helical membrane-spanning segment; it reads VVVGISPELWAFVMLFLLFDV. His295 is a topological domain (extracellular). The chain crosses the membrane as a helical span at residues 296 to 316; sequence GWYVTAVITMIPPLLTLAIGT. The Cytoplasmic portion of the chain corresponds to 317-359; the sequence is KLQAIISDMALEIQERHAVIQGMPLVNVSDRHFWFSRPALVLH. Residues 360–380 traverse the membrane as a helical segment; the sequence is IIHFILFQNAFEITYFFWIWY. The Extracellular portion of the chain corresponds to 381-391; the sequence is EFGLRSCFHHH. A helical membrane pass occupies residues 392 to 412; that stretch reads FALIIIRVALGVGVQFLCSYI. Topologically, residues 413 to 501 are cytoplasmic; that stretch reads TLPLYALVTQ…SQSRDLLSGP (89 aa). The segment at 443–501 is disordered; the sequence is WHKNAKKKSETPGQTQPPLPNLRPKTGGDIESASPANITASVDVKESDQSQSRDLLSGP. The tract at residues 450–471 is calmodulin-binding; the sequence is KSETPGQTQPPLPNLRPKTGGD. Polar residues predominate over residues 491 to 501; the sequence is QSQSRDLLSGP.

The protein belongs to the MLO family.

It is found in the membrane. Functionally, may be involved in modulation of pathogen defense and leaf cell death. Activity seems to be regulated by Ca(2+)-dependent calmodulin binding and seems not to require heterotrimeric G proteins. The polypeptide is MLO-like protein 5 (MLO5) (Arabidopsis thaliana (Mouse-ear cress)).